Consider the following 179-residue polypeptide: ADP-ribosylation factor-like protein 5A (179 aa).

Residue Gly-2 is the site of N-myristoyl glycine attachment. GTP-binding positions include 23-30, 66-70, 125-128, and Ala-159; these read GLDNAGKT, DIGGQ, and NKQD.

This sequence belongs to the small GTPase superfamily. Arf family.

In terms of biological role, lacks ADP-ribosylation enhancing activity. The polypeptide is ADP-ribosylation factor-like protein 5A (ARL5A) (Bos taurus (Bovine)).